A 135-amino-acid polypeptide reads, in one-letter code: ATP synthase epsilon chain (135 aa).

Belongs to the ATPase epsilon chain family. As to quaternary structure, F-type ATPases have 2 components, CF(1) - the catalytic core - and CF(0) - the membrane proton channel. CF(1) has five subunits: alpha(3), beta(3), gamma(1), delta(1), epsilon(1). CF(0) has three main subunits: a, b and c.

Its subcellular location is the cellular thylakoid membrane. In terms of biological role, produces ATP from ADP in the presence of a proton gradient across the membrane. In Prochlorococcus marinus (strain MIT 9211), this protein is ATP synthase epsilon chain.